We begin with the raw amino-acid sequence, 38 residues long: MTQPNPNKQSVEPNRTSLYWGLLLIFVLAVLFSNYFFN.

A helical transmembrane segment spans residues 17-37 (SLYWGLLLIFVLAVLFSNYFF).

The protein belongs to the PsbL family. As to quaternary structure, PSII is composed of 1 copy each of membrane proteins PsbA, PsbB, PsbC, PsbD, PsbE, PsbF, PsbH, PsbI, PsbJ, PsbK, PsbL, PsbM, PsbT, PsbX, PsbY, PsbZ, Psb30/Ycf12, at least 3 peripheral proteins of the oxygen-evolving complex and a large number of cofactors. It forms dimeric complexes.

The protein localises to the plastid. The protein resides in the chloroplast thylakoid membrane. Functionally, one of the components of the core complex of photosystem II (PSII). PSII is a light-driven water:plastoquinone oxidoreductase that uses light energy to abstract electrons from H(2)O, generating O(2) and a proton gradient subsequently used for ATP formation. It consists of a core antenna complex that captures photons, and an electron transfer chain that converts photonic excitation into a charge separation. This subunit is found at the monomer-monomer interface and is required for correct PSII assembly and/or dimerization. The protein is Photosystem II reaction center protein L of Adiantum capillus-veneris (Maidenhair fern).